A 440-amino-acid polypeptide reads, in one-letter code: D-serine dehydratase (440 aa).

Lys-116 bears the N6-(pyridoxal phosphate)lysine mark.

It belongs to the serine/threonine dehydratase family. DsdA subfamily. In terms of assembly, monomer. The cofactor is pyridoxal 5'-phosphate.

The enzyme catalyses D-serine = pyruvate + NH4(+). The protein is D-serine dehydratase of Salmonella schwarzengrund (strain CVM19633).